The primary structure comprises 220 residues: Vesicle-associated membrane protein 7 (220 aa).

The Cytoplasmic portion of the chain corresponds to 2–188 (AILFAVVARG…ARAMCMKNLK (187 aa)). Residues 7–110 (VVARGTTILA…AMNSEFSSVL (104 aa)) enclose the Longin domain. In terms of domain architecture, v-SNARE coiled-coil homology spans 125–185 (QVAETQAQVD…RNLARAMCMK (61 aa)). A helical; Anchor for type IV membrane protein membrane pass occupies residues 189-209 (LTIIIIIVSIVIIYIIVSAAC). The Vesicular portion of the chain corresponds to 210–220 (GGLAWPSCVQK).

It belongs to the synaptobrevin family.

The protein resides in the cytoplasmic vesicle. It localises to the secretory vesicle membrane. Its subcellular location is the golgi apparatus. It is found in the trans-Golgi network membrane. The protein localises to the late endosome membrane. The protein resides in the lysosome membrane. It localises to the endoplasmic reticulum membrane. Its subcellular location is the phagosome membrane. It is found in the synapse. The protein localises to the synaptosome. In terms of biological role, involved in the targeting and/or fusion of transport vesicles to their target membrane during transport of proteins from the early endosome to the lysosome. Required for heterotypic fusion of late endosomes with lysosomes and homotypic lysosomal fusion. Required for calcium regulated lysosomal exocytosis. Involved in the export of chylomicrons from the endoplasmic reticulum to the cis Golgi. Required for focal exocytosis of late endocytic vesicles during phagosome formation. The chain is Vesicle-associated membrane protein 7 from Gallus gallus (Chicken).